The following is a 927-amino-acid chain: Protein translocase subunit SecA (927 aa).

ATP contacts are provided by residues Q86, 104 to 108 (GEGKT), and D494. The segment at 853 to 927 (YTAPDEDGTP…GSKAKRGKRR (75 aa)) is disordered. Residues 860–879 (GTPHAEVEAVDPGARERTSE) are compositionally biased toward basic and acidic residues. Basic residues predominate over residues 907–927 (RAKRRGASARSGSKAKRGKRR).

It belongs to the SecA family. Monomer and homodimer. Part of the essential Sec protein translocation apparatus which comprises SecA, SecYEG and auxiliary proteins SecDF. Other proteins may also be involved.

It is found in the cell membrane. It localises to the cytoplasm. It catalyses the reaction ATP + H2O + cellular proteinSide 1 = ADP + phosphate + cellular proteinSide 2.. In terms of biological role, part of the Sec protein translocase complex. Interacts with the SecYEG preprotein conducting channel. Has a central role in coupling the hydrolysis of ATP to the transfer of proteins into and across the cell membrane, serving as an ATP-driven molecular motor driving the stepwise translocation of polypeptide chains across the membrane. This Kocuria rhizophila (strain ATCC 9341 / DSM 348 / NBRC 103217 / DC2201) protein is Protein translocase subunit SecA.